The primary structure comprises 395 residues: uncharacterized protein (395 aa).

Disordered regions lie at residues 1–121 (MLLP…TANS), 136–187 (MRMK…LDRN), 308–335 (QNNEDTIRKSVPPSREPGSKMMTVSKDE), and 365–395 (IQKFRKKYQKQLKKSQEEKKDDTKTAKNEGD). Residues 13–28 (PKGEAKSLVARERKSQ) show a composition bias toward basic and acidic residues. A compositionally biased stretch (basic residues) spans 64–73 (KSAKLRRKKS). Residues 97 to 111 (SIEKKKEEMTSKLPE) are compositionally biased toward basic and acidic residues. Residues 144-164 (TSRMATKSDSSLETMPESSHN) show a composition bias toward polar residues. The span at 170-179 (KSRKSQRTRG) shows a compositional bias: basic residues. Over residues 365-377 (IQKFRKKYQKQLK) the composition is skewed to basic residues. Positions 378–395 (KSQEEKKDDTKTAKNEGD) are enriched in basic and acidic residues.

This is an uncharacterized protein from Caenorhabditis elegans.